Consider the following 521-residue polypeptide: Colicin-E1* (521 aa).

Disordered stretches follow at residues 26–52 (NGNP…AAIH) and 127–163 (SGCA…EKEQ). Gly residues predominate over residues 30–42 (DGSGSGGGGGTGG). Residues 133-145 (KQKKKPVKKRKRA) are compositionally biased toward basic residues. Residues 146-163 (EKSFQEAEQRRKEIEKEQ) show a composition bias toward basic and acidic residues. Helical transmembrane passes span 470–486 (AVDA…FSVL) and 493–509 (IWGI…FIDK).

This sequence belongs to the channel forming colicin family.

It is found in the cell membrane. Its function is as follows. This colicin is a channel-forming colicin. This class of transmembrane toxins depolarize the cytoplasmic membrane, leading to dissipation of cellular energy. Functionally, colicins are polypeptide toxins produced by and active against E.coli and closely related bacteria. This is Colicin-E1* (cea) from Shigella sonnei.